The primary structure comprises 253 residues: Chloride intracellular channel protein 4 (253 aa).

A2 is subject to N-acetylalanine. Positions 2 to 101 (ALSMPLNGLK…EEFLEEVLCP (100 aa)) are required for insertion into the membrane. S4 is modified (phosphoserine). K24 bears the N6-acetyllysine mark. Positions 35-38 (CPFS) match the G-site motif. Residues 37–57 (FSQRLFMILWLKGVVFSVTTV) traverse the membrane as a helical segment. One can recognise a GST C-terminal domain in the interval 81-244 (NSEVKTDVNK…PSDKEVEIAY (164 aa)). Position 130 is an N6-acetyllysine (K130). S132, S167, and S236 each carry phosphoserine. Y244 is subject to Phosphotyrosine.

Belongs to the chloride channel CLIC family. In terms of assembly, monomer. Interacts with HRH30. Interacts with AKAP9. As to expression, detected in blood vessels in the retina (at protein level). Expressed to the greatest extent in vivo in heart, lung, liver, kidney, and skin.

The protein resides in the cytoplasm. It is found in the cytoskeleton. It localises to the microtubule organizing center. Its subcellular location is the centrosome. The protein localises to the cytoplasmic vesicle membrane. The protein resides in the nucleus. It is found in the cell membrane. It localises to the mitochondrion. Its subcellular location is the cell junction. The catalysed reaction is chloride(in) = chloride(out). It carries out the reaction thiocyanate(in) = thiocyanate(out). The enzyme catalyses nitrate(in) = nitrate(out). It catalyses the reaction iodide(out) = iodide(in). The catalysed reaction is bromide(in) = bromide(out). It carries out the reaction fluoride(in) = fluoride(out). The enzyme catalyses choline(out) = choline(in). Its function is as follows. In the soluble state, catalyzes glutaredoxin-like thiol disulfide exchange reactions with reduced glutathione as electron donor. Can insert into membranes and form voltage-dependent multi-ion conductive channels. Membrane insertion seems to be redox-regulated and may occur only under oxidizing conditions. Has alternate cellular functions like a potential role in angiogenesis or in maintaining apical-basolateral membrane polarity during mitosis and cytokinesis. Could also promote endothelial cell proliferation and regulate endothelial morphogenesis (tubulogenesis). Promotes cell-surface expression of HRH3. The sequence is that of Chloride intracellular channel protein 4 (Clic4) from Mus musculus (Mouse).